The chain runs to 449 residues: Chromogranin-A (449 aa).

The first 18 residues, 1–18 (MRSAAVLALLLCAGQVIA), serve as a signal peptide directing secretion. Residues Cys-35 and Cys-56 are joined by a disulfide bond. The tract at residues 87–431 (AKERTHQQKK…EDQELESLSA (345 aa)) is disordered. Ser-99 carries the phosphoserine modification. Over residues 107–140 (VLEKPNDQAEPKEVTEEVSSKDAAEKRDDFKEVE) the composition is skewed to basic and acidic residues. Ser-142 bears the Phosphoserine mark. O-linked (GalNAc...) serine glycosylation occurs at Ser-185. Phosphotyrosine is present on Tyr-191. The residue at position 200 (Ser-200) is a Phosphoserine. A glycan (O-linked (GalNAc...) serine) is linked at Ser-204. The residue at position 215 (Ser-215) is a Phosphoserine. Over residues 233–242 (EAEAREKAVP) the composition is skewed to basic and acidic residues. An O-linked (GalNAc...) threonine glycan is attached at Thr-249. The segment covering 279 to 297 (GAEEAKPPEGKGEWAHSRQ) has biased composition (basic and acidic residues). Position 295 is a phosphoserine (Ser-295). Gly-312 bears the Glycine amide mark. Residues Ser-315, Ser-325, and Ser-363 each carry the phosphoserine modification. A compositionally biased stretch (basic and acidic residues) spans 323 to 351 (QLSKEWEDAKRWSKMDQLAKELTAEKRLE). Residue Met-364 is modified to Methionine sulfoxide. Ser-390, Ser-394, Ser-416, and Ser-430 each carry phosphoserine. Positions 406-423 (YPEEKKEEEGSANRRPED) are enriched in basic and acidic residues. Ser-416 carries O-linked (Xyl...) (chondroitin sulfate) serine glycosylation.

This sequence belongs to the chromogranin/secretogranin protein family. In terms of assembly, self-interacts; self-assembly is promoted in vitro by chondroitin sulfate attachment which occurs at mildly acidic pH conditions. Interacts with SCG3. Interacts with ITPR1 in the secretory granules. In secretory granules, is attacked at both N- and C-terminal sides by proteolytic enzymes generating numerous peptides of various activities. Proteolytic processing can give rise to additional longer forms of catestatin peptides which display a less potent catecholamine release-inhibitory activity. Post-translationally, O-glycosylated; contains chondroitin sulfate (CS). CS attachment is pH-dependent, being observed at mildly acidic conditions of pH 5 but not at neutral pH, and promotes self-assembly in vitro. Highest concentration of GE-25 found in adrenal medulla with lower levels present in the pituitary, the intestinal mucosa and the pancreas. Also found in the brain.

It is found in the secreted. The protein localises to the cytoplasmic vesicle. The protein resides in the secretory vesicle. Its subcellular location is the neuronal dense core vesicle. In terms of biological role, strongly inhibits glucose induced insulin release from the pancreas. Completely inhibits catecholamine release from chromaffin cells. Its function is as follows. Has antibacterial activity against M.luteus. Not active against E.coli. Functionally, inhibits catecholamine release from chromaffin cells and noradrenergic neurons by acting as a non-competitive nicotinic cholinergic antagonist. Displays antibacterial activity against Gram-positive bacteria M.luteus and B.megaterium, and Gram-negative bacteria E.coli, and antifungal activity against a variety of filamentous fungi including A.fumigatus, N.hematococca, F.culmorum, F.oxyporum, T.mentagrophytes and several forms of Candida: C.albicans, C.tropicalis, C.glabrata and C.neoform. Can induce mast cell migration, degranulation and production of cytokines and chemokines. In terms of biological role, has antibacterial activity against Gram-positive bacteria M.luteus, B.megaterium. Not active against Gram-positive bacteria B.cereus, B.subtilis, S.pyogenes, M.fortuitum, S.aureus and L.monocytogenes and against Gram-negative bacteria E.coli, E.cloacae, S.typhimurium, K.pneumoniae and P.aeruginosa. Possesses antifungal activity against N.crassa, A.fumigatus, A.brassicicola, N.hematococca, F.culmorum and F.oxyporum and against the yeast S.cerevisiae and C.albicans. Inactive against A.benhamiae. Has antifungal activity against N.crassa, A.fumigatus, A.brassicicola, N.hematococca, F.culmorum, F.oxyporum, A.benhamiae, C.neoformans, as well as against yeasts C.albicans, and C.tropicalis. Seems to be inactive against C.glabrata. Interacts with the fungal cell wall, crosses the plasma membrane and accumulates in fungal cells where it inhibits calcineurin activity. Its function is as follows. Regulates granule biogenesis in endocrine cells by up-regulating the transcription of protease nexin 1 (SERPINE2) via a cAMP-PKA-SP1 pathway. This leads to inhibition of granule protein degradation in the Golgi complex which in turn promotes granule formation. The chain is Chromogranin-A (CHGA) from Bos taurus (Bovine).